A 362-amino-acid chain; its full sequence is 3-dehydroquinate synthase (362 aa).

Residues aspartate 71–lysine 76, glycine 105–aspartate 109, threonine 129–threonine 130, lysine 142, and lysine 151 each bind NAD(+). Residues glutamate 184, histidine 247, and histidine 264 each coordinate Zn(2+).

The protein belongs to the sugar phosphate cyclases superfamily. Dehydroquinate synthase family. Co(2+) is required as a cofactor. Zn(2+) serves as cofactor. The cofactor is NAD(+).

Its subcellular location is the cytoplasm. It carries out the reaction 7-phospho-2-dehydro-3-deoxy-D-arabino-heptonate = 3-dehydroquinate + phosphate. It participates in metabolic intermediate biosynthesis; chorismate biosynthesis; chorismate from D-erythrose 4-phosphate and phosphoenolpyruvate: step 2/7. Catalyzes the conversion of 3-deoxy-D-arabino-heptulosonate 7-phosphate (DAHP) to dehydroquinate (DHQ). This is 3-dehydroquinate synthase from Blochmanniella pennsylvanica (strain BPEN).